The primary structure comprises 676 residues: XK-related protein 5 (676 aa).

The next 7 helical transmembrane spans lie at 37–57 (WLAL…FLWF), 114–134 (LLEA…VFLA), 140–160 (IVPG…LVSY), 206–226 (VWVL…LVAQ), 239–259 (LFNL…WDSP), 266–286 (SFYL…TDFL), and 294–314 (LWTV…LVIY). Disordered regions lie at residues 336-362 (PIED…DSSS), 372-391 (TSLD…GLGE), 495-538 (LEDN…KEGQ), and 598-661 (PIPG…IQRD). The span at 498-509 (NATTQKPPATQE) shows a compositional bias: polar residues.

Belongs to the XK family.

It localises to the cell membrane. The sequence is that of XK-related protein 5 from Mus musculus (Mouse).